The primary structure comprises 183 residues: Oligoribonuclease (183 aa).

The 164-residue stretch at leucine 9–leucine 172 folds into the Exonuclease domain. Tyrosine 130 is an active-site residue.

Belongs to the oligoribonuclease family.

It is found in the cytoplasm. Functionally, 3'-to-5' exoribonuclease specific for small oligoribonucleotides. This is Oligoribonuclease from Acinetobacter baylyi (strain ATCC 33305 / BD413 / ADP1).